A 320-amino-acid chain; its full sequence is Histidine decarboxylase proenzyme (320 aa).

The propeptide occupies 2 to 11 (NKNLEANRNR). A Pyruvic acid (Ser) modification is found at Ser-98. Glu-215 serves as the catalytic Proton donor.

In terms of assembly, the proenzyme is a hexamer of identical pi chains; each pi chain monomer is cleaved to form a small (or beta) chain and a large (or alpha) chain by non-hydrolytic self-catalysis. It depends on pyruvate as a cofactor.

The catalysed reaction is L-histidine + H(+) = histamine + CO2. This is Histidine decarboxylase proenzyme (hdc) from Clostridium perfringens (strain ATCC 13124 / DSM 756 / JCM 1290 / NCIMB 6125 / NCTC 8237 / Type A).